A 308-amino-acid chain; its full sequence is Methionyl-tRNA formyltransferase (308 aa).

A (6S)-5,6,7,8-tetrahydrofolate-binding site is contributed by 109 to 112; it reads SLLP.

This sequence belongs to the Fmt family.

The enzyme catalyses L-methionyl-tRNA(fMet) + (6R)-10-formyltetrahydrofolate = N-formyl-L-methionyl-tRNA(fMet) + (6S)-5,6,7,8-tetrahydrofolate + H(+). In terms of biological role, attaches a formyl group to the free amino group of methionyl-tRNA(fMet). The formyl group appears to play a dual role in the initiator identity of N-formylmethionyl-tRNA by promoting its recognition by IF2 and preventing the misappropriation of this tRNA by the elongation apparatus. The polypeptide is Methionyl-tRNA formyltransferase (Rhizorhabdus wittichii (strain DSM 6014 / CCUG 31198 / JCM 15750 / NBRC 105917 / EY 4224 / RW1) (Sphingomonas wittichii)).